The primary structure comprises 227 residues: Phosphoribosylaminoimidazole-succinocarboxamide synthase (227 aa).

The protein belongs to the SAICAR synthetase family.

The catalysed reaction is 5-amino-1-(5-phospho-D-ribosyl)imidazole-4-carboxylate + L-aspartate + ATP = (2S)-2-[5-amino-1-(5-phospho-beta-D-ribosyl)imidazole-4-carboxamido]succinate + ADP + phosphate + 2 H(+). It functions in the pathway purine metabolism; IMP biosynthesis via de novo pathway; 5-amino-1-(5-phospho-D-ribosyl)imidazole-4-carboxamide from 5-amino-1-(5-phospho-D-ribosyl)imidazole-4-carboxylate: step 1/2. The sequence is that of Phosphoribosylaminoimidazole-succinocarboxamide synthase from Clostridium tetani (strain Massachusetts / E88).